The following is a 239-amino-acid chain: Mediator of RNA polymerase II transcription subunit 7 (239 aa).

Disordered regions lie at residues 1-21 and 43-66; these read MSSL…PPPP and LFVN…DMSV. A compositionally biased stretch (basic and acidic residues) spans 46–66; that stretch reads NDEKGKTKGKEKKSDDRDMSV.

It belongs to the Mediator complex subunit 7 family. In terms of assembly, component of the Mediator complex.

The protein localises to the nucleus. In terms of biological role, component of the Mediator complex, a coactivator involved in the regulated transcription of nearly all RNA polymerase II-dependent genes. Mediator functions as a bridge to convey information from gene-specific regulatory proteins to the basal RNA polymerase II transcription machinery. Mediator is recruited to promoters by direct interactions with regulatory proteins and serves as a scaffold for the assembly of a functional preinitiation complex with RNA polymerase II and the general transcription factors. The chain is Mediator of RNA polymerase II transcription subunit 7 (MED7) from Cryptococcus neoformans var. neoformans serotype D (strain B-3501A) (Filobasidiella neoformans).